The following is a 329-amino-acid chain: MAELFWFEKYRPRSFDEVVDLEEVKARLREFVRGGNMPHLLFYGPPGTGKTTMALVLARELYGEYWRENTLELNASDERGINVIRERVKEFARTAPVGKAPFKLVILDEADNMTSDAQQALRRIMEMYAQNTRFILLANYVSRIIDPIISRCAVFRFSPMPRSLMAERLRHIAKSEGIELRDDAIDLIYEVSEGDMRKAINLLQVAAATSKVVDANAVASATTMIRPADVVELFNLAFNGDVTKAREKLRELMYVKGIAGIDFIRAFQRELIRMPLDDEVKAEIAELLAEVDYRLTQGSDEELQLLYLLSKLGAIGKRARQTPPPSKRR.

44 to 51 (GPPGTGKT) provides a ligand contact to ATP.

Belongs to the activator 1 small subunits family. RfcS subfamily. Heteromultimer composed of small subunits (RfcS) and large subunits (RfcL).

Its function is as follows. Part of the RFC clamp loader complex which loads the PCNA sliding clamp onto DNA. The sequence is that of Replication factor C small subunit 1 from Pyrobaculum arsenaticum (strain DSM 13514 / JCM 11321 / PZ6).